A 521-amino-acid polypeptide reads, in one-letter code: MSLSRSEEMHRLTENVYKTIMEQFNPSLRNFIAMGKNYEKALAGVTFAAKGYFDALVKMGELASESQGSKELGDVLFQMAEVHRQIQNQLEEMLKSFHNELLTQLEQKVELDSRYLSAALKKYQAEQRSKGDALDKCQAELKKLRKKSQGSKNPQKYSDKELQYIDAISNKQGELENYVSDGYKTALTEERRRFCFLVEKQCAVAKNSAAYHSKGKELLAQKLPVWQQACADPNKIPDRAVQLMQQIASSNGSILPSTLSASKSNLVISDPIPGAKPLPVPPELAPFVGRMSAQENVPVMNGVAGPDSEDYNPWADRKAAQPKSLSPPQSQSKLSDSYSNTLPVRKSVTPKNSYATTENKTLPRSSSMAAGLERNGRMRVKAIFSHAAGDNSTLLSFKEGDLITLLVPEARDGWHYGESEKTKMRGWFPFSYTRVLDSDGSDRLHMSLQQGKSSSTGNLLDKDDLAVPPPDYGTSSRAFPTQTAGTFKQRPYSVAVPAFSQGLDDYGARSVSSADVEVARF.

Positions methionine 1–serine 250 constitute an IMD domain. Positions aspartate 132–asparagine 153 form a coiled coil. Phosphoserine is present on residues serine 262, serine 324, serine 326, and serine 337. The segment at valine 299–alanine 370 is disordered. Positions glutamine 321 to serine 335 are enriched in low complexity. Threonine 341 bears the Phosphothreonine mark. Serine 347 is subject to Phosphoserine. A compositionally biased stretch (polar residues) spans threonine 349–methionine 368. Threonine 361 carries the post-translational modification Phosphothreonine. 4 positions are modified to phosphoserine: serine 367, serine 385, serine 396, and serine 455. The region spanning asparagine 375–serine 438 is the SH3 domain. The interval histidine 445–proline 480 is disordered. Positions serine 447–asparagine 458 are enriched in polar residues.

Homodimer. Interacts with CDC42 and RAC1 that have been activated by GTP binding. Interacts with ATN1, ADGRB1, DIAPH1, EPS8, SHANK1, SHANK2, SHANK3, TIAM1, WASF1 and WASF2. Interacts with ENAH after recruitment of CDC42. Post-translationally, phosphorylated on tyrosine residues by INSR in response to insulin treatment.

It is found in the cytoplasm. The protein localises to the membrane. The protein resides in the cell projection. Its subcellular location is the filopodium. It localises to the ruffle. It is found in the cytoskeleton. In terms of biological role, adapter protein that links membrane-bound small G-proteins to cytoplasmic effector proteins. Necessary for CDC42-mediated reorganization of the actin cytoskeleton and for RAC1-mediated membrane ruffling. Involved in the regulation of the actin cytoskeleton by WASF family members and the Arp2/3 complex. Plays a role in neurite growth. Acts syngeristically with ENAH to promote filipodia formation. Plays a role in the reorganization of the actin cytoskeleton in response to bacterial infection. Participates in actin bundling when associated with EPS8, promoting filopodial protrusions. The chain is BAR/IMD domain-containing adapter protein 2 (BAIAP2) from Cricetulus griseus (Chinese hamster).